The following is a 377-amino-acid chain: GDSL esterase/lipase 4 (377 aa).

A signal peptide spans 1–21 (MASPRFNSIIIILFICTISLS). The Nucleophile role is filled by S44. Residues N135, N188, N194, N207, and N241 are each glycosylated (N-linked (GlcNAc...) asparagine). Residues D342 and H345 contribute to the active site. Residue N364 is glycosylated (N-linked (GlcNAc...) asparagine).

Belongs to the 'GDSL' lipolytic enzyme family.

The protein resides in the secreted. This chain is GDSL esterase/lipase 4 (GLIP4), found in Arabidopsis thaliana (Mouse-ear cress).